The sequence spans 177 residues: ATP synthase subunit delta (177 aa).

Belongs to the ATPase delta chain family. As to quaternary structure, F-type ATPases have 2 components, F(1) - the catalytic core - and F(0) - the membrane proton channel. F(1) has five subunits: alpha(3), beta(3), gamma(1), delta(1), epsilon(1). F(0) has three main subunits: a(1), b(2) and c(10-14). The alpha and beta chains form an alternating ring which encloses part of the gamma chain. F(1) is attached to F(0) by a central stalk formed by the gamma and epsilon chains, while a peripheral stalk is formed by the delta and b chains.

Its subcellular location is the cell inner membrane. Functionally, f(1)F(0) ATP synthase produces ATP from ADP in the presence of a proton or sodium gradient. F-type ATPases consist of two structural domains, F(1) containing the extramembraneous catalytic core and F(0) containing the membrane proton channel, linked together by a central stalk and a peripheral stalk. During catalysis, ATP synthesis in the catalytic domain of F(1) is coupled via a rotary mechanism of the central stalk subunits to proton translocation. In terms of biological role, this protein is part of the stalk that links CF(0) to CF(1). It either transmits conformational changes from CF(0) to CF(1) or is implicated in proton conduction. This Vibrio vulnificus (strain CMCP6) protein is ATP synthase subunit delta.